The primary structure comprises 605 residues: Elongation factor 4 (605 aa).

Residues 9–192 (GMIRNFCIIA…AIVARVPAPA (184 aa)) enclose the tr-type G domain. Residues 21 to 26 (DHGKST) and 139 to 142 (NKID) contribute to the GTP site.

It belongs to the TRAFAC class translation factor GTPase superfamily. Classic translation factor GTPase family. LepA subfamily.

Its subcellular location is the cell inner membrane. The enzyme catalyses GTP + H2O = GDP + phosphate + H(+). Required for accurate and efficient protein synthesis under certain stress conditions. May act as a fidelity factor of the translation reaction, by catalyzing a one-codon backward translocation of tRNAs on improperly translocated ribosomes. Back-translocation proceeds from a post-translocation (POST) complex to a pre-translocation (PRE) complex, thus giving elongation factor G a second chance to translocate the tRNAs correctly. Binds to ribosomes in a GTP-dependent manner. The polypeptide is Elongation factor 4 (Chlorobaculum tepidum (strain ATCC 49652 / DSM 12025 / NBRC 103806 / TLS) (Chlorobium tepidum)).